The primary structure comprises 392 residues: Phosphoglycerate kinase (392 aa).

Substrate is bound by residues 19-21 (DYN), arginine 34, 57-60 (HLGR), arginine 116, and arginine 149. Residues lysine 199, glutamate 321, and 347–350 (GGDS) each bind ATP.

It belongs to the phosphoglycerate kinase family. As to quaternary structure, monomer.

It localises to the cytoplasm. It catalyses the reaction (2R)-3-phosphoglycerate + ATP = (2R)-3-phospho-glyceroyl phosphate + ADP. It participates in carbohydrate degradation; glycolysis; pyruvate from D-glyceraldehyde 3-phosphate: step 2/5. This is Phosphoglycerate kinase from Thermomicrobium roseum (strain ATCC 27502 / DSM 5159 / P-2).